Reading from the N-terminus, the 88-residue chain is Small ribosomal subunit protein uS17 (88 aa).

It belongs to the universal ribosomal protein uS17 family. As to quaternary structure, part of the 30S ribosomal subunit.

Its function is as follows. One of the primary rRNA binding proteins, it binds specifically to the 5'-end of 16S ribosomal RNA. This Prochlorococcus marinus (strain MIT 9312) protein is Small ribosomal subunit protein uS17.